Consider the following 346-residue polypeptide: NADH-ubiquinone oxidoreductase chain 2 (346 aa).

11 consecutive transmembrane segments (helical) span residues 1-21 (MNPH…TITI), 25-45 (HWVL…PLIS), 60-80 (FLTQ…NAWA), 95-115 (CLLL…HFWF), 124-144 (LMTA…LLLM), 149-169 (LNPA…GWMG), 178-195 (ILAF…IILV), 200-219 (LALL…FMAL), 242-262 (ATLM…GFMP), 274-294 (EMTP…FFYL), and 326-346 (AILA…HAIV).

Belongs to the complex I subunit 2 family.

The protein resides in the mitochondrion inner membrane. It catalyses the reaction a ubiquinone + NADH + 5 H(+)(in) = a ubiquinol + NAD(+) + 4 H(+)(out). Core subunit of the mitochondrial membrane respiratory chain NADH dehydrogenase (Complex I) that is believed to belong to the minimal assembly required for catalysis. Complex I functions in the transfer of electrons from NADH to the respiratory chain. The immediate electron acceptor for the enzyme is believed to be ubiquinone. This is NADH-ubiquinone oxidoreductase chain 2 (MT-ND2) from Mareca falcata (Falcated duck).